The sequence spans 306 residues: ADP,ATP carrier protein ER-ANT1 (306 aa).

Solcar repeat units lie at residues 8-101 (ERFS…FKNL), 113-205 (KWFA…IKPI), and 213-299 (GNFL…LHQI). A run of 5 helical transmembrane segments spans residues 10–37 (FSAD…VKLL), 78–102 (QANV…KNLL), 111–131 (YLKW…TTSL), 181–202 (FGVS…YDTI), and 216–236 (LASF…AYPF). 2 residues coordinate ADP: arginine 83 and lysine 95. An ADP-binding site is contributed by arginine 240. The important for transport activity stretch occupies residues 240-245 (RRRMML). A Nucleotide carrier signature motif motif is present at residues 240–245 (RRRMML). The chain crosses the membrane as a helical span at residues 276 to 296 (VTANMLLGVAGAGVLAGYDQL).

This sequence belongs to the mitochondrial carrier (TC 2.A.29) family.

Its subcellular location is the endoplasmic reticulum membrane. It catalyses the reaction ADP(in) + ATP(out) = ADP(out) + ATP(in). ADP:ATP antiporter that catalyzes the exchange of ADP and ATP across the endoplasmic reticulum membrane. The polypeptide is ADP,ATP carrier protein ER-ANT1 (ER-ANT1) (Arabidopsis thaliana (Mouse-ear cress)).